The following is a 216-amino-acid chain: Probable Golgi SNAP receptor complex member 2 (216 aa).

Residues 1–194 (MESLYHQTNN…IERRLVEDRR (194 aa)) lie on the Cytoplasmic side of the membrane. Residues 62–103 (QRQSSKLRVDQLKYDLRHLQTSLQTARERRQRRMQEISEREQ) are a coiled coil. A helical; Anchor for type IV membrane protein membrane pass occupies residues 195–215 (IFIGGVVVTLLIIALIIYFLV). L216 is a topological domain (vesicular).

It belongs to the GOSR2 family. In terms of assembly, part of a unique SNARE complex.

Its subcellular location is the golgi apparatus. It is found in the cis-Golgi network membrane. The protein resides in the golgi apparatus membrane. It localises to the endoplasmic reticulum membrane. Involved in transport of proteins from the cis/medial-Golgi to the trans-Golgi network. In Drosophila melanogaster (Fruit fly), this protein is Probable Golgi SNAP receptor complex member 2.